Reading from the N-terminus, the 189-residue chain is Resolvase (189 aa).

A Resolvase/invertase-type recombinase catalytic domain is found at 1–139; sequence MLVGYARVST…EGLKSAKARG (139 aa). Residue serine 9 is the O-(5'-phospho-DNA)-serine intermediate of the active site. The segment at 130–151 is disordered; sequence EGLKSAKARGRNGGRPSKRNDK. The segment at residues 165–184 is a DNA-binding region (H-T-H motif); that stretch reads IVDIVKQTGLSRATVYRVLN.

The protein belongs to the site-specific recombinase resolvase family.

Its function is as follows. A likely role for the res protein would be to stabilize pIP404 by reducing the number of plasmid multimers resulting from homologous recombination. The protein is Resolvase (res) of Clostridium perfringens.